Consider the following 242-residue polypeptide: MLTLGVNIDHVATIRQARQTVMEPDPIAAAVLAELAGADGITAHLREDRRHIQERDVEILRKTVRTHLNLEMAATKEMVEIALNLKPDYVTLVPERREEVTTEGGLDVAGNLNYLLGVVEQLQSRHIPVSLFIDPDVAQLKASAQTGAKFIELHTGKYANAPTADDQARELGSLAIACDIALELGLRINAGHGLTYWNVRPVAELPGMEELNIGHSIMSRAILVGMERAVREMKLAMLGLPF.

Asn-7 contacts 3-amino-2-oxopropyl phosphate. 1-deoxy-D-xylulose 5-phosphate is bound at residue 9 to 10 (DH). Arg-18 contributes to the 3-amino-2-oxopropyl phosphate binding site. His-44 acts as the Proton acceptor in catalysis. 1-deoxy-D-xylulose 5-phosphate is bound by residues Arg-46 and His-51. The Proton acceptor role is filled by Glu-71. Thr-101 contacts 1-deoxy-D-xylulose 5-phosphate. The active-site Proton donor is the His-192. Residues Gly-193 and 214 to 215 (GH) each bind 3-amino-2-oxopropyl phosphate.

This sequence belongs to the PNP synthase family. In terms of assembly, homooctamer; tetramer of dimers.

It is found in the cytoplasm. The catalysed reaction is 3-amino-2-oxopropyl phosphate + 1-deoxy-D-xylulose 5-phosphate = pyridoxine 5'-phosphate + phosphate + 2 H2O + H(+). It functions in the pathway cofactor biosynthesis; pyridoxine 5'-phosphate biosynthesis; pyridoxine 5'-phosphate from D-erythrose 4-phosphate: step 5/5. Functionally, catalyzes the complicated ring closure reaction between the two acyclic compounds 1-deoxy-D-xylulose-5-phosphate (DXP) and 3-amino-2-oxopropyl phosphate (1-amino-acetone-3-phosphate or AAP) to form pyridoxine 5'-phosphate (PNP) and inorganic phosphate. The sequence is that of Pyridoxine 5'-phosphate synthase from Synechocystis sp. (strain ATCC 27184 / PCC 6803 / Kazusa).